A 262-amino-acid polypeptide reads, in one-letter code: Putative hydro-lyase Cbei_2760 (262 aa).

It belongs to the D-glutamate cyclase family.

The sequence is that of Putative hydro-lyase Cbei_2760 from Clostridium beijerinckii (strain ATCC 51743 / NCIMB 8052) (Clostridium acetobutylicum).